Consider the following 866-residue polypeptide: MTTFGAVAEWRLPSLRRATLWIPQWFAKKAIFNSPLEAAMAFPHLQQPSFLLASLKADSINKPFAQQCQDLVKVIEDFPAKELHTIFPWLVESIFGSLDGVLVGWNLRCLQGRVNPVEYSIVMEFLDPGGPMMKLVYKLQAEDYKFDFPVSYLPGPVKASIQECILPDSPLYHNKVQFTPTGGLGLNLALNPFEYYIFFFALSLITQKPLPVSLHVRTSDCAYFILVDRYLSWFLPTEGSVPPPLSSSPGGTSPSPPPRTPAIPFASYGLHHTSLLKRHISHQTSVNADPASHEIWRSETLLQVFVEMWLHHYSLEMYQKMQSPHAKLEVLHYRLSVSSALYSPAQPSLQALHAYQESFTPTEEHVLVVRLLLKHLHAFANSLKPEQASPSAHSHATSPLEEFKRAAVPRFVQQKLYLFLQHCFGHWPLDASFRAVLEMWLSYLQPWRYAPDKQAPGSDSQPRCVSEKWAPFVQENLLMYTKLFVGFLNRALRTDLVSPKHALMVFRVAKVFAQPNLAEMIQKGEQLFLEPELVIPHRQHRLFTAPTFTGSFLSPWPPAVTDASFKVKSHVYSLEGQDCKYTPMFGPEARTLVLRLAQLITQAKHTAKSISDQCAESPAGHSFLSWLGFSSMDTNGSYTANDLDEMGQDSVRKTDEYLEKALEYLRQIFRLSEAQLRQFTLALGTTQDENGKKQLPDCIVGEDGLILTPLGRYQIINGLRRFEIEYQGDPELQPIRSYEIASLVRTLFRLSSAINHRFAGQMAALCSRDDFLGSFCRYHLTEPGLASRHLLSPVGRRQVAGHTRGPRLSLRFLGSYRTLVSLLLAFFVASLFCVGPLPCTLLLTLGYVLYASAMTLLTERGKLHQP.

Serine 169 and serine 285 each carry phosphoserine. The residue at position 708 (threonine 708) is a Phosphothreonine. The residue at position 792 (serine 792) is a Phosphoserine. The chain crosses the membrane as a helical span at residues 822 to 842; it reads LLLAFFVASLFCVGPLPCTLL.

Mg(2+) serves as cofactor. As to expression, widely expressed, with highest levels in heart and skeletal muscle. Expressed in skeletal muscle (at protein level). In terms of tissue distribution, expressed in skeletal muscle but a lower levels than isoform 1 (at protein level).

The protein resides in the endoplasmic reticulum membrane. It localises to the golgi apparatus membrane. The protein localises to the nucleus envelope. It is found in the cell membrane. Its subcellular location is the sarcolemma. It carries out the reaction a sphingomyelin + H2O = phosphocholine + an N-acylsphing-4-enine + H(+). Activated by phosphatidylserine and tumor necrosis factor (TNF). Inhibited by scyphostatin. In terms of biological role, catalyzes the hydrolysis of membrane sphingomyelin to form phosphorylcholine and ceramide. It has a relevant role in the homeostasis of membrane sphingolipids, thereby influencing membrane integrity, and endoplasmic reticulum organization and function. May sensitize cells to DNA damage-induced apoptosis. In skeletal muscle, mediates TNF-stimulated oxidant production. The protein is Sphingomyelin phosphodiesterase 4 of Homo sapiens (Human).